Consider the following 217-residue polypeptide: Superoxide dismutase [Mn], mitochondrial (217 aa).

A mitochondrion-targeting transit peptide spans 1–17 (MFVARKISPNCKPGVRG). 4 residues coordinate Mn(2+): histidine 43, histidine 91, aspartate 175, and histidine 179.

This sequence belongs to the iron/manganese superoxide dismutase family. As to quaternary structure, homotetramer. Requires Mn(2+) as cofactor.

The protein localises to the mitochondrion matrix. It catalyses the reaction 2 superoxide + 2 H(+) = H2O2 + O2. Destroys superoxide anion radicals which are normally produced within the cells and which are toxic to biological systems. This chain is Superoxide dismutase [Mn], mitochondrial (Sod2), found in Drosophila melanogaster (Fruit fly).